The following is a 180-amino-acid chain: UPF0134 protein MPN_127 (180 aa).

This sequence belongs to the UPF0134 family.

This Mycoplasma pneumoniae (strain ATCC 29342 / M129 / Subtype 1) (Mycoplasmoides pneumoniae) protein is UPF0134 protein MPN_127.